Reading from the N-terminus, the 660-residue chain is Probable Xaa-Pro aminopeptidase PTRG_10574 (660 aa).

Mn(2+)-binding residues include aspartate 274, aspartate 285, glutamate 435, and glutamate 476. The disordered stretch occupies residues 641-660 (SAGSGSTPLWKPHNKQDKKN).

The protein belongs to the peptidase M24B family. Mn(2+) is required as a cofactor.

It catalyses the reaction Release of any N-terminal amino acid, including proline, that is linked to proline, even from a dipeptide or tripeptide.. Catalyzes the removal of a penultimate prolyl residue from the N-termini of peptides. This is Probable Xaa-Pro aminopeptidase PTRG_10574 from Pyrenophora tritici-repentis (strain Pt-1C-BFP) (Wheat tan spot fungus).